The following is a 366-amino-acid chain: Inactive protein RESTRICTED TEV MOVEMENT 2 (366 aa).

The sHSP domain maps to 14-121; it reads VQYEDFVPKS…LPETSRTEAA (108 aa). An A-1 repeat occupies 129–133; sequence LEEKR. A 6 X 5 AA repeats A of L-E-E-[SKR]-[ERK] region spans residues 129–220; it reads LEEKRLLEES…LEERRLEERK (92 aa). An A-2 repeat occupies 135-139; it reads LEESR. The stretch at 156–160 is one A-3 repeat; sequence LEEKE. Residues 163-176 form a B-1 repeat; that stretch reads IRKLQEEAKAKEEA. The 3 X 14 AA repeats B of [IMA]-[RK]-K-L-Q-E-E-A-K-A-K-E-[EK]-[LA] stretch occupies residues 163–206; the sequence is IRKLQEEAKAKEEAEMRKLQEEAKANEEAAAKKLQEEIEAKEKL. A B-2 repeat occupies 178-191; it reads MRKLQEEAKANEEA. The stretch at 193–205 is one B-3 repeat; it reads AKKLQEEIEAKEK. An A-4 repeat occupies 206-210; the sequence is LEERK. An A-5 repeat occupies 211 to 215; that stretch reads LEERR. Residues 216–220 form an A-6 repeat; sequence LEERK. Residues 322–342 form a helical membrane-spanning segment; it reads LMMNVGVAALVIFALGAYVSY. The disordered stretch occupies residues 345-366; that stretch reads CSSSSSSSSSSPSSSSSSTKPE. Residues 346–366 show a composition bias toward low complexity; the sequence is SSSSSSSSSSPSSSSSSTKPE.

It belongs to the small heat shock protein (HSP20) family.

It localises to the cell membrane. Its function is as follows. Seems to not be involved in heat resistance. Unable to mediate restriction of long-distance movement of the pathogenic tobacco etch virus (TEV) without causing a hypersensitive response or inducing systemic acquired resistance. The sequence is that of Inactive protein RESTRICTED TEV MOVEMENT 2 (RTM2) from Arabidopsis thaliana (Mouse-ear cress).